The chain runs to 115 residues: NADH-ubiquinone oxidoreductase chain 3 (115 aa).

A run of 3 helical transmembrane segments spans residues 3 to 23 (LMLA…IAFW), 55 to 75 (FFLV…LLPL), and 84 to 104 (LNTM…SLAY).

This sequence belongs to the complex I subunit 3 family. Core subunit of respiratory chain NADH dehydrogenase (Complex I) which is composed of 45 different subunits. Interacts with TMEM186. Interacts with TMEM242.

It localises to the mitochondrion inner membrane. It carries out the reaction a ubiquinone + NADH + 5 H(+)(in) = a ubiquinol + NAD(+) + 4 H(+)(out). In terms of biological role, core subunit of the mitochondrial membrane respiratory chain NADH dehydrogenase (Complex I) which catalyzes electron transfer from NADH through the respiratory chain, using ubiquinone as an electron acceptor. Essential for the catalytic activity of complex I. The sequence is that of NADH-ubiquinone oxidoreductase chain 3 from Bos indicus (Zebu).